A 760-amino-acid polypeptide reads, in one-letter code: Serine/threonine-protein kinase PknG (760 aa).

A disordered region spans residues 1–31; that stretch reads MTSPENPDLPDADDAYVDSGPGTQPASLEDL. The 243-residue stretch at 161 to 403 folds into the Protein kinase domain; the sequence is YEIKGCIAHG…SAEEMSSQLL (243 aa). ATP-binding positions include 167-175 and lysine 191; that span reads IAHGGLGWV. Residue aspartate 286 is the Proton acceptor of the active site.

This sequence belongs to the protein kinase superfamily. Ser/Thr protein kinase family. In terms of assembly, interacts with GarA in vitro.

The enzyme catalyses L-seryl-[protein] + ATP = O-phospho-L-seryl-[protein] + ADP + H(+). It catalyses the reaction L-threonyl-[protein] + ATP = O-phospho-L-threonyl-[protein] + ADP + H(+). The polypeptide is Serine/threonine-protein kinase PknG (pknG) (Mycolicibacterium smegmatis (strain ATCC 700084 / mc(2)155) (Mycobacterium smegmatis)).